Reading from the N-terminus, the 431-residue chain is PHD finger-containing protein 1 (431 aa).

The segment at 7–59 (GPVCQTCGDIGFEEALVFCDSCMFESIHRYCLGITPIPFTEYITWICEDCDNS) adopts a PHD-type zinc-finger fold. Zn(2+) is bound by residues Cys-10, Cys-13, Cys-25, Cys-28, His-34, Cys-37, Cys-53, and Cys-56. A disordered region spans residues 125–221 (EAADSSSVPD…QESSDSRKPH (97 aa)). A compositionally biased stretch (polar residues) spans 128–139 (DSSSVPDHSSCT). Residues 160–171 (KKKKKKKKKKSI) show a composition bias toward basic residues. Residues 191–202 (VVEPVEVSSSSP) are compositionally biased toward low complexity. Over residues 205–221 (ETMESKRQESSDSRKPH) the composition is skewed to basic and acidic residues.

As to quaternary structure, interacts directly with AIPP3/BDT1.

Its function is as follows. Together with AIPP3/BDT1, cooperates to form a BAH-PHD bivalent histone reader complex able to read histone H3 lysine 27 trimethylation (H3K27me3) histone marks in order to regulate transcription, especially to prevent early flowering; promotes AIPP3/BDT1 binding to H3K27me3. In Arabidopsis thaliana (Mouse-ear cress), this protein is PHD finger-containing protein 1.